A 182-amino-acid chain; its full sequence is UPF0301 protein MCA0413 1 (182 aa).

The protein belongs to the UPF0301 (AlgH) family.

The protein is UPF0301 protein MCA0413 1 of Methylococcus capsulatus (strain ATCC 33009 / NCIMB 11132 / Bath).